The chain runs to 874 residues: Coatomer subunit gamma-1 (874 aa).

Residues 1–11 (MLKKFDKKDEE) are compositionally biased toward basic and acidic residues. The disordered stretch occupies residues 1–21 (MLKKFDKKDEESGGGSNPFQH). HEAT repeat units lie at residues 64-101 (TEATEAFFAMTKLFQSNDPTLRRMCYLTIKEMSCIAED), 283-320 (KELAPAVSVLQLFCSSPKAALRYAAVRTLNKVAMKHPS), 322-355 (VTACNLDLENLVTDSNRSIATLAITTLLKTGSES), and 356-392 (SIDRLMKQISSFMSEISDEFKVVVVQAISALCQKYPR). At Thr-594 the chain carries Phosphothreonine. The interval 609-874 (RQEIFQEQLA…PVDIILASVG (266 aa)) is interaction with ZNF289/ARFGAP2.

It belongs to the COPG family. In terms of assembly, oligomeric complex that consists of at least the alpha, beta, beta', gamma, delta, epsilon and zeta subunits. Interacts with ZNF289/ARFGAP2 through its C-terminal appendage domain. Interacts with EGFR upon EGF treatment; interaction is essential for regulation of EGF-dependent nuclear transport of EGFR by retrograde trafficking from the Golgi to the ER. The coatomer interacts with KDEL receptors; the interaction is important for retrograde trafficking of KDEL-bearing proteins from the Golgi to the endoplasmic reticulum. Interacts with COPB1. Interacts with TMED10 (via C-terminus). Interacts with TMED2, TMED3, TMED7 and TMED9.

The protein resides in the cytoplasm. Its subcellular location is the golgi apparatus membrane. It localises to the cytoplasmic vesicle. It is found in the COPI-coated vesicle membrane. In terms of biological role, the coatomer is a cytosolic protein complex that binds to dilysine motifs and reversibly associates with Golgi non-clathrin-coated vesicles, which further mediate biosynthetic protein transport from the ER, via the Golgi up to the trans Golgi network. Coatomer complex is required for budding from Golgi membranes, and is essential for the retrograde Golgi-to-ER transport of dilysine-tagged proteins. In mammals, the coatomer can only be recruited by membranes associated to ADP-ribosylation factors (ARFs), which are small GTP-binding proteins; the complex also influences the Golgi structural integrity, as well as the processing, activity, and endocytic recycling of LDL receptors. Required for limiting lipid storage in lipid droplets. Involved in lipid homeostasis by regulating the presence of perilipin family members PLIN2 and PLIN3 at the lipid droplet surface and promoting the association of adipocyte triglyceride lipase (PNPLA2) with the lipid droplet surface to mediate lipolysis. The polypeptide is Coatomer subunit gamma-1 (COPG1) (Homo sapiens (Human)).